The chain runs to 113 residues: Insulin (113 aa).

Residues Met1–Ala24 form the signal peptide. 3 disulfide bridges follow: Cys32/Cys99, Cys44/Cys112, and Cys98/Cys103. A propeptide spans Asp56 to Val90 (c peptide).

Belongs to the insulin family. As to quaternary structure, heterodimer of a B chain and an A chain linked by two disulfide bonds.

The protein localises to the secreted. Insulin decreases blood glucose concentration. It increases cell permeability to monosaccharides, amino acids and fatty acids. It accelerates glycolysis, the pentose phosphate cycle, and glycogen synthesis in liver. This is Insulin (ins) from Oreochromis niloticus (Nile tilapia).